A 352-amino-acid chain; its full sequence is Diacylglycerol acyltransferase/mycolyltransferase Ag85C (352 aa).

Residues 1 to 37 form the signal peptide; sequence MSFIEKVRKLRGAAATMPRRLAIAAVGASLLSGVAVA. 86 to 87 lines the substrate pocket; it reads LR. The fibronectin-binding stretch occupies residues 102–112; it reads FEEFYQSGLSV. Substrate is bound by residues Ser-170 and Asn-198. Ser-170 acts as the Nucleophile in catalysis. The active site involves Glu-274. Residues 276-279 and 306-308 each bind substrate; these read LTLR and HSW. Residue His-306 is part of the active site. Residues 332–352 are disordered; the sequence is TAAPAQPAQPAQPAQPAQPAT. The segment covering 333–352 has biased composition (low complexity); the sequence is AAPAQPAQPAQPAQPAQPAT.

The protein belongs to the mycobacterial A85 antigen family. As to quaternary structure, homodimer.

The protein resides in the secreted. The catalysed reaction is an acyl-CoA + a 1,2-diacyl-sn-glycerol = a triacyl-sn-glycerol + CoA. It catalyses the reaction 2 alpha,alpha'-trehalose 6-mycolate = alpha,alpha'-trehalose 6,6'-bismycolate + alpha,alpha-trehalose. In terms of biological role, the antigen 85 proteins (FbpA, FbpB, FbpC) are responsible for the high affinity of mycobacteria to fibronectin, a large adhesive glycoprotein, which facilitates the attachment of M.tuberculosis to murine alveolar macrophages (AMs). They also help to maintain the integrity of the cell wall by catalyzing the transfer of mycolic acids to cell wall arabinogalactan and through the synthesis of alpha,alpha-trehalose dimycolate (TDM, cord factor). They catalyze the transfer of a mycoloyl residue from one molecule of alpha,alpha-trehalose monomycolate (TMM) to another TMM, leading to the formation of TDM. This is Diacylglycerol acyltransferase/mycolyltransferase Ag85C (fbpC) from Mycobacterium avium.